The primary structure comprises 256 residues: MILVFDVGNTNIVLGVFSGSRLVANWRLSTDRYRTSDEYGIMLRELFAFSGLEMKQIKAVVVSTVVPPLTFTLERLCQKYFNLTPLVVGPGIKTGLSIKIDNPREVGADRIVNAVAGYEQYGGPLVIVDFGTATTFCAVSARGEYLGGAIAPGISISTEALFARAAKLPRVEVVKPLSVIGRNTVASMQAGIFYGFVGQVDEIVKRMKKELGENTRVIATGGLAGLIAQESATIEQVDPFLTLKGLRLIYERNAQR.

An ATP-binding site is contributed by 6 to 13; that stretch reads DVGNTNIV. Residue 107–110 participates in substrate binding; that stretch reads GADR. Catalysis depends on Asp109, which acts as the Proton acceptor. Asp129 is a K(+) binding site. Thr132 lines the ATP pocket. Thr184 lines the substrate pocket.

It belongs to the type III pantothenate kinase family. In terms of assembly, homodimer. NH4(+) is required as a cofactor. Requires K(+) as cofactor.

The protein localises to the cytoplasm. It catalyses the reaction (R)-pantothenate + ATP = (R)-4'-phosphopantothenate + ADP + H(+). It participates in cofactor biosynthesis; coenzyme A biosynthesis; CoA from (R)-pantothenate: step 1/5. Its function is as follows. Catalyzes the phosphorylation of pantothenate (Pan), the first step in CoA biosynthesis. The protein is Type III pantothenate kinase of Pelotomaculum thermopropionicum (strain DSM 13744 / JCM 10971 / SI).